The primary structure comprises 530 residues: MRAERLRLSEEQGQRILRLYHLYRLTIGLVLVLLISSELEDQVLKLVHPELFHVGSWCYLVFNILVALFLPPSRQLLPIFILALTDVLMLCGLFYAGGGVPSGIGSLLVVAVAIANILLRGRIGLVIAAAASLGLLYLTFFLSLSSPDATNHYVQAGGLGTLCFAAALVIQALVRRQEQTETLAEERAETVANLEELNALILQRMRTGILVVDSRQAILLANQAALGLLRQDDVQGASLGRHSPMLMHCMKQWRLNPSLRPPTLKVVPDGPTVQPSFISLNREDDQHVLIFLEDISQIAQQAQQMKLAGLGRLTAGIAHEIRNPLGAISHAAQLLQESEELDAPDRRLTQIIQDQSKRMNLVIENVLQLSRRRQAEPQQLDLKEWLQRFVDEYPGRLRNDSQLHLQLGAGDIQTRMDPHQLNQVLSNLVQNGLRYSAQAHGRGQVWLSLARDPESDLPVLEVIDDGPGVPADKLNNLFEPFFTTESKGTGLGLYLSRELCESNQARIDYRNREEGGGCFRITFAHPRKLS.

Helical transmembrane passes span 25–37 (LTIG…LISS), 57–70 (WCYL…ALFL), 76–98 (LLPI…YAGG), 101–119 (PSGI…NILL), 124–144 (GLVI…FLSL), and 156–174 (AGGL…QALV). The Cytoplasmic portion of the chain corresponds to 175 to 530 (RRQEQTETLA…ITFAHPRKLS (356 aa)). Residues 196–260 (ELNALILQRM…KQWRLNPSLR (65 aa)) enclose the PAS domain. A Histidine kinase domain is found at 316–527 (GIAHEIRNPL…CFRITFAHPR (212 aa)). H319 is modified (phosphohistidine; by autocatalysis).

As to quaternary structure, interacts with PilA.

It localises to the cell inner membrane. The enzyme catalyses ATP + protein L-histidine = ADP + protein N-phospho-L-histidine.. Member of the two-component regulatory system PilS/PilR that regulates the expression of multiple genes including the type IV pilus (T4P) major subunit PilA. Thereby, plays a major role in the regulation of multiple motility pathways. Functions as a membrane-associated protein kinase that phosphorylates PilR in response to environmental signals leading to activation of specific gene promoters including the pilin gene. The protein is Sensor protein kinase PilS (pilS) of Pseudomonas aeruginosa (strain ATCC 15692 / DSM 22644 / CIP 104116 / JCM 14847 / LMG 12228 / 1C / PRS 101 / PAO1).